Consider the following 248-residue polypeptide: Adenosylcobinamide-GDP ribazoletransferase (248 aa).

Transmembrane regions (helical) follow at residues 32 to 52 (FPLVGLLLGLLQAALAWIGMV), 60 to 80 (ALLVLLSGVLLTRAIHADGLA), 103 to 123 (AVGSFGVIALILLFLFKWIAL), 134 to 154 (WIVSGIVLARFVQVVLASVMT), 170 to 190 (AGGWHVVVAALFSLLILVLVM), 195 to 215 (LPIVVALLATAVSGSLTGMLA), and 227 to 247 (LGASSEMTEALVWCSALLLLF).

The protein belongs to the CobS family. The cofactor is Mg(2+).

The protein localises to the cell inner membrane. It catalyses the reaction alpha-ribazole + adenosylcob(III)inamide-GDP = adenosylcob(III)alamin + GMP + H(+). The enzyme catalyses alpha-ribazole 5'-phosphate + adenosylcob(III)inamide-GDP = adenosylcob(III)alamin 5'-phosphate + GMP + H(+). It participates in cofactor biosynthesis; adenosylcobalamin biosynthesis; adenosylcobalamin from cob(II)yrinate a,c-diamide: step 7/7. Joins adenosylcobinamide-GDP and alpha-ribazole to generate adenosylcobalamin (Ado-cobalamin). Also synthesizes adenosylcobalamin 5'-phosphate from adenosylcobinamide-GDP and alpha-ribazole 5'-phosphate. This is Adenosylcobinamide-GDP ribazoletransferase from Prosthecochloris aestuarii (strain DSM 271 / SK 413).